Consider the following 126-residue polypeptide: Penicillinase repressor (126 aa).

Residues 7-71 (EISMAEWDVM…KSENIYFYSS (65 aa)) constitute a DNA-binding region (H-T-H motif). An important for dimerization region spans residues 74–126 (KEDDIKMKTAKTFLNKLYGGDMKSLVLNFAKNEELNNKEIEELRDILNDISKK).

This sequence belongs to the BlaI transcriptional regulatory family. In terms of assembly, homodimer. Upon exposure to beta-lactams, the protease BlaR1 is activated and cleaves BlaI at a single site. This proteolytic cleavage impairs dimerization and abolishes repressor activity.

Its subcellular location is the cytoplasm. Transcriptional repressor that constitutively blocks expression of beta-lactamase. Binds DNA as a dimer. The sequence is that of Penicillinase repressor (blaI) from Staphylococcus aureus.